The chain runs to 195 residues: Putative EGF-like and EMI domain-containing protein 1 (195 aa).

The EGF-like domain maps to 86 to 97; the sequence is CTCKSGYQGNRC.

This is Putative EGF-like and EMI domain-containing protein 1 (EGFEM1P) from Homo sapiens (Human).